Here is a 262-residue protein sequence, read N- to C-terminus: Trypsin theta (262 aa).

The N-terminal stretch at 1 to 19 (MHGLVVLLVCLAVGSAFAG) is a signal peptide. Residues 20–34 (TIGVSNADPFEREGR) constitute a propeptide, activation peptide. The Peptidase S1 domain maps to 35-260 (IVGGEDTTIR…LRKWILNASQ (226 aa)). Residues Cys61 and Cys77 are joined by a disulfide bond. Residues His76 and Asp121 each act as charge relay system in the active site. 2 cysteine pairs are disulfide-bonded: Cys186–Cys203 and Cys212–Cys236. Residue Ser216 is the Charge relay system of the active site.

It belongs to the peptidase S1 family.

It localises to the secreted. It is found in the extracellular space. The enzyme catalyses Preferential cleavage: Arg-|-Xaa, Lys-|-Xaa.. This Drosophila erecta (Fruit fly) protein is Trypsin theta (thetaTry).